Here is a 343-residue protein sequence, read N- to C-terminus: GTP 3',8-cyclase (343 aa).

One can recognise a Radical SAM core domain in the interval 19 to 244 (PFGRNISYLR…TDLDDSTGGP (226 aa)). Residue Arg28 participates in GTP binding. [4Fe-4S] cluster-binding residues include Cys35 and Cys39. S-adenosyl-L-methionine is bound at residue Tyr41. Cys42 lines the [4Fe-4S] cluster pocket. Arg77 contributes to the GTP binding site. Gly81 lines the S-adenosyl-L-methionine pocket. Thr111 is a binding site for GTP. Ser135 contacts S-adenosyl-L-methionine. Lys171 contacts GTP. Residue Met205 participates in S-adenosyl-L-methionine binding. [4Fe-4S] cluster contacts are provided by Cys268 and Cys271. 273-275 (RVR) contributes to the GTP binding site. Residue Cys285 participates in [4Fe-4S] cluster binding.

The protein belongs to the radical SAM superfamily. MoaA family. In terms of assembly, monomer and homodimer. Requires [4Fe-4S] cluster as cofactor.

The enzyme catalyses GTP + AH2 + S-adenosyl-L-methionine = (8S)-3',8-cyclo-7,8-dihydroguanosine 5'-triphosphate + 5'-deoxyadenosine + L-methionine + A + H(+). The protein operates within cofactor biosynthesis; molybdopterin biosynthesis. Its function is as follows. Catalyzes the cyclization of GTP to (8S)-3',8-cyclo-7,8-dihydroguanosine 5'-triphosphate. In Nitrobacter winogradskyi (strain ATCC 25391 / DSM 10237 / CIP 104748 / NCIMB 11846 / Nb-255), this protein is GTP 3',8-cyclase.